The primary structure comprises 172 residues: RNA pyrophosphohydrolase (172 aa).

The 144-residue stretch at 6-149 folds into the Nudix hydrolase domain; it reads GFRANVGIII…KRDVYRKVMK (144 aa). The Nudix box signature appears at 38–59; the sequence is GGLDDGESVEEAMYRELYEEVG.

It belongs to the Nudix hydrolase family. RppH subfamily. A divalent metal cation is required as a cofactor.

Accelerates the degradation of transcripts by removing pyrophosphate from the 5'-end of triphosphorylated RNA, leading to a more labile monophosphorylated state that can stimulate subsequent ribonuclease cleavage. The sequence is that of RNA pyrophosphohydrolase from Shewanella frigidimarina (strain NCIMB 400).